The following is a 420-amino-acid chain: Gamma-glutamyl phosphate reductase (420 aa).

Belongs to the gamma-glutamyl phosphate reductase family.

The protein resides in the cytoplasm. The catalysed reaction is L-glutamate 5-semialdehyde + phosphate + NADP(+) = L-glutamyl 5-phosphate + NADPH + H(+). It functions in the pathway amino-acid biosynthesis; L-proline biosynthesis; L-glutamate 5-semialdehyde from L-glutamate: step 2/2. Functionally, catalyzes the NADPH-dependent reduction of L-glutamate 5-phosphate into L-glutamate 5-semialdehyde and phosphate. The product spontaneously undergoes cyclization to form 1-pyrroline-5-carboxylate. This Streptococcus pneumoniae (strain ATCC 700669 / Spain 23F-1) protein is Gamma-glutamyl phosphate reductase.